A 213-amino-acid chain; its full sequence is Serine acetyltransferase (213 aa).

The protein belongs to the transferase hexapeptide repeat family.

It localises to the cytoplasm. The catalysed reaction is L-serine + acetyl-CoA = O-acetyl-L-serine + CoA. The protein operates within amino-acid biosynthesis; L-cysteine biosynthesis; L-cysteine from L-serine: step 1/2. The protein is Serine acetyltransferase (cysE) of Staphylococcus epidermidis (strain ATCC 35984 / DSM 28319 / BCRC 17069 / CCUG 31568 / BM 3577 / RP62A).